A 203-amino-acid chain; its full sequence is Na(+)-translocating NADH-quinone reductase subunit E (203 aa).

6 consecutive transmembrane segments (helical) span residues 11–31, 35–55, 82–102, 115–135, 145–165, and 181–201; these read SIFI…FLAV, ISTA…TVPL, FLGL…LEMF, GIFL…LFMV, MVYG…MAGV, and LGIT…FSGI.

Belongs to the NqrDE/RnfAE family. In terms of assembly, composed of six subunits; NqrA, NqrB, NqrC, NqrD, NqrE and NqrF.

The protein localises to the cell inner membrane. It carries out the reaction a ubiquinone + n Na(+)(in) + NADH + H(+) = a ubiquinol + n Na(+)(out) + NAD(+). In terms of biological role, NQR complex catalyzes the reduction of ubiquinone-1 to ubiquinol by two successive reactions, coupled with the transport of Na(+) ions from the cytoplasm to the periplasm. NqrA to NqrE are probably involved in the second step, the conversion of ubisemiquinone to ubiquinol. The chain is Na(+)-translocating NADH-quinone reductase subunit E from Dichelobacter nodosus (strain VCS1703A).